Reading from the N-terminus, the 334-residue chain is Ketol-acid reductoisomerase (NADP(+)) (334 aa).

The KARI N-terminal Rossmann domain maps to 1–181 (MTTVYYDQDV…GATRAGVIET (181 aa)). NADP(+) is bound by residues 25–28 (YGSQ), Arg-48, Ser-52, and 82–85 (DEIQ). Residue His-107 is part of the active site. An NADP(+)-binding site is contributed by Gly-133. The region spanning 182–327 (TFKEETETDL…RELREMMPFI (146 aa)) is the KARI C-terminal knotted domain. Residues Asp-190, Glu-194, Glu-226, and Glu-230 each contribute to the Mg(2+) site. Ser-251 is a substrate binding site.

The protein belongs to the ketol-acid reductoisomerase family. Mg(2+) is required as a cofactor.

The enzyme catalyses (2R)-2,3-dihydroxy-3-methylbutanoate + NADP(+) = (2S)-2-acetolactate + NADPH + H(+). The catalysed reaction is (2R,3R)-2,3-dihydroxy-3-methylpentanoate + NADP(+) = (S)-2-ethyl-2-hydroxy-3-oxobutanoate + NADPH + H(+). It functions in the pathway amino-acid biosynthesis; L-isoleucine biosynthesis; L-isoleucine from 2-oxobutanoate: step 2/4. Its pathway is amino-acid biosynthesis; L-valine biosynthesis; L-valine from pyruvate: step 2/4. Its function is as follows. Involved in the biosynthesis of branched-chain amino acids (BCAA). Catalyzes an alkyl-migration followed by a ketol-acid reduction of (S)-2-acetolactate (S2AL) to yield (R)-2,3-dihydroxy-isovalerate. In the isomerase reaction, S2AL is rearranged via a Mg-dependent methyl migration to produce 3-hydroxy-3-methyl-2-ketobutyrate (HMKB). In the reductase reaction, this 2-ketoacid undergoes a metal-dependent reduction by NADPH to yield (R)-2,3-dihydroxy-isovalerate. This Staphylococcus aureus (strain Mu3 / ATCC 700698) protein is Ketol-acid reductoisomerase (NADP(+)).